The chain runs to 700 residues: Stonustoxin subunit beta (700 aa).

Residues 2–264 (PSDILVVAAL…EAPQLMADSS (263 aa)) are structural MACPF/CDC pore-forming domain. Residues 265-384 (TPILRKVRNT…DILTKAKPKV (120 aa)) form a structural FAT domain region. Residues 385–514 (IFNQGVLFKG…PYMPGVESIK (130 aa)) form a thioredoxin (THX) domain region. Positions 506–700 (YMPGVESIKD…QKVNGQIKLL (195 aa)) constitute a B30.2/SPRY domain.

Belongs to the SNTX/VTX toxin family. As to quaternary structure, heterodimer of alpha and beta subunits; non-covalently linked. Post-translationally, intrachain disulfide bonds may be present in the heterodimer. In terms of processing, not glycosylated. As to expression, expressed by the venom gland.

It localises to the secreted. Its function is as follows. This lethal (towards mammals) heterodimer induces hemolytic activities due to its ability to form pores in the cell membrane. The pore may be composed of 10 SNTX-alpha/beta heterodimers. The toxin elicits potent hypotension which is endothelium-dependent and appears to be mediated by the nitric oxide pathway and activation of potassium channels. In addition, it displays edema-inducing activities, increases vascular permeability. It also shows myotoxic activities and interferes irreversibly with neuromuscular function. It also induces irreversible platelet aggregation in rabbit or rat but not in human or mouse whole blood. In addition, it has been observed to increase spontaneous quantal acetylcholine release from isolated frog cutaneous pectoris motor endings. The polypeptide is Stonustoxin subunit beta (Synanceia horrida (Estuarine stonefish)).